The sequence spans 484 residues: Serine/arginine-rich splicing factor 11 (484 aa).

The disordered stretch occupies residues 1–33 (MSNTTVVPSTAGPGPSGGPGGGGGGGGGGGGTE). Position 2 is an N-acetylserine (serine 2). Residues 14–32 (GPSGGPGGGGGGGGGGGGT) are compositionally biased toward gly residues. An RRM domain is found at 33–113 (EVIQVTNVSP…ALIVVPYAEG (81 aa)). A Glycyl lysine isopeptide (Lys-Gly) (interchain with G-Cter in SUMO2) cross-link involves residue lysine 197. Serine 207 carries the post-translational modification Phosphoserine. Residue lysine 211 forms a Glycyl lysine isopeptide (Lys-Gly) (interchain with G-Cter in SUMO2) linkage. Position 212 is a phosphoserine (serine 212). Residues 233–484 (ISAAIEPDKK…HHEEDMDMSD (252 aa)) are disordered. Basic residues predominate over residues 244 to 308 (EKRRHSRSRS…ERGRRSRSTS (65 aa)). A run of 10 repeats spans residues 247 to 255 (RHSRSRSRS), 258 to 265 (RRTPSSSR), 267 to 274 (RRSRSRSR), 275 to 282 (RRSHSKSR), 285 to 292 (RRSKSPRR), 293 to 300 (RRSHSRER), 302 to 309 (RRSRSTSK), 321 to 328 (KRSKTPPK), 334 to 341 (RRSRSASR), and 346 to 353 (RRSRSGTR). Residues 247 to 353 (RHSRSRSRSR…RRRRSRSGTR (107 aa)) are 10 X 8 AA approximate repeats of R-R-S-R-S-R-S-R. Positions 309 to 320 (KTRDKKKEDKEK) are enriched in basic and acidic residues. Phosphoserine is present on serine 323. The residue at position 325 (threonine 325) is a Phosphothreonine. The segment covering 334-379 (RRSRSASRERRRRRSRSGTRSPKKPRSPKRKLSRSPSPRRHKKEKK) has biased composition (basic residues). Basic and acidic residues-rich tracts occupy residues 380–395 (KDKDKERSRDERERST), 402–424 (KDKEKDRERKSESDKDVKQVTRD), and 433–478 (DSEK…HHEE). Residues serine 414 and serine 434 each carry the phosphoserine modification. Threonine 447 carries the phosphothreonine modification. Serine 449, serine 456, serine 464, and serine 483 each carry phosphoserine.

It belongs to the splicing factor SR family. As to quaternary structure, interacts with PUF60.

The protein resides in the nucleus. Functionally, may function in pre-mRNA splicing. The chain is Serine/arginine-rich splicing factor 11 (SRSF11) from Homo sapiens (Human).